Reading from the N-terminus, the 235-residue chain is Ubiquinone/menaquinone biosynthesis C-methyltransferase UbiE (235 aa).

S-adenosyl-L-methionine-binding residues include Thr59, Asp84, and Ser123.

The protein belongs to the class I-like SAM-binding methyltransferase superfamily. MenG/UbiE family.

The catalysed reaction is a 2-demethylmenaquinol + S-adenosyl-L-methionine = a menaquinol + S-adenosyl-L-homocysteine + H(+). The enzyme catalyses a 2-methoxy-6-(all-trans-polyprenyl)benzene-1,4-diol + S-adenosyl-L-methionine = a 5-methoxy-2-methyl-3-(all-trans-polyprenyl)benzene-1,4-diol + S-adenosyl-L-homocysteine + H(+). It participates in quinol/quinone metabolism; menaquinone biosynthesis; menaquinol from 1,4-dihydroxy-2-naphthoate: step 2/2. It functions in the pathway cofactor biosynthesis; ubiquinone biosynthesis. In terms of biological role, methyltransferase required for the conversion of demethylmenaquinol (DMKH2) to menaquinol (MKH2) and the conversion of 2-polyprenyl-6-methoxy-1,4-benzoquinol (DDMQH2) to 2-polyprenyl-3-methyl-6-methoxy-1,4-benzoquinol (DMQH2). The polypeptide is Ubiquinone/menaquinone biosynthesis C-methyltransferase UbiE (Campylobacter jejuni subsp. jejuni serotype O:6 (strain 81116 / NCTC 11828)).